The primary structure comprises 415 residues: Serine hydroxymethyltransferase (415 aa).

(6S)-5,6,7,8-tetrahydrofolate is bound by residues Leu-117 and 121–123 (GHL). Lys-226 is modified (N6-(pyridoxal phosphate)lysine). (6S)-5,6,7,8-tetrahydrofolate contacts are provided by residues Glu-241 and 349–351 (SPF).

This sequence belongs to the SHMT family. As to quaternary structure, homodimer. It depends on pyridoxal 5'-phosphate as a cofactor.

The protein localises to the cytoplasm. It carries out the reaction (6R)-5,10-methylene-5,6,7,8-tetrahydrofolate + glycine + H2O = (6S)-5,6,7,8-tetrahydrofolate + L-serine. It participates in one-carbon metabolism; tetrahydrofolate interconversion. The protein operates within amino-acid biosynthesis; glycine biosynthesis; glycine from L-serine: step 1/1. In terms of biological role, catalyzes the reversible interconversion of serine and glycine with tetrahydrofolate (THF) serving as the one-carbon carrier. This reaction serves as the major source of one-carbon groups required for the biosynthesis of purines, thymidylate, methionine, and other important biomolecules. Also exhibits THF-independent aldolase activity toward beta-hydroxyamino acids, producing glycine and aldehydes, via a retro-aldol mechanism. This is Serine hydroxymethyltransferase from Trichlorobacter lovleyi (strain ATCC BAA-1151 / DSM 17278 / SZ) (Geobacter lovleyi).